A 718-amino-acid chain; its full sequence is Exostosin-2 (718 aa).

Over 1 to 25 (MCASVKYNIRGPALIPRMKTKHRIY) the chain is Cytoplasmic. Residues 26–46 (YITLFSIVLLGLIATGMFQFW) traverse the membrane as a helical; Signal-anchor for type II membrane protein segment. The Lumenal segment spans residues 47 to 718 (PHSIESSNDW…LKSFPNIGSL (672 aa)). Cystine bridges form between Cys-85-Cys-90, Cys-96-Cys-151, Cys-286-Cys-300, and Cys-318-Cys-339. The N-linked (GlcNAc...) asparagine glycan is linked to Asn-288. 4 residues coordinate UDP: Leu-461, Arg-465, Asn-490, and Asn-517. Positions 465, 490, 517, 522, 538, 539, and 540 each coordinate UDP-N-acetyl-alpha-D-glucosamine. 2 residues coordinate UDP: Asp-538 and Asp-539. A Mn(2+)-binding site is contributed by Asp-540. A protein contacts are provided by Tyr-582 and Ser-584. An intrachain disulfide couples Cys-626 to Cys-676. UDP-N-acetyl-alpha-D-glucosamine contacts are provided by Glu-627 and Asp-628. The N-linked (GlcNAc...) asparagine glycan is linked to Asn-637. 2 residues coordinate a protein: Lys-651 and Lys-653. Position 673 (Arg-673) interacts with UDP-N-acetyl-alpha-D-glucosamine.

The protein belongs to the glycosyltransferase 47 family. Part of the heparan sulfate polymerase, a dimeric complex composed of EXT1 and EXT2. Could also form homooligomeric complexes. Interacts with NDST1. Interacts with GALNT5. Mn(2+) is required as a cofactor. In terms of processing, N-glycosylated at Asn-637. A soluble form is generated by proteolytic processing. As to expression, widely expressed.

The protein localises to the golgi apparatus membrane. It localises to the golgi apparatus. Its subcellular location is the cis-Golgi network membrane. It is found in the endoplasmic reticulum membrane. The protein resides in the secreted. It catalyses the reaction 3-O-{[(1-&gt;4)-beta-D-GlcA-(1-&gt;4)-alpha-D-GlcNAc](n)-(1-&gt;4)-beta-D-GlcA-(1-&gt;3)-beta-D-Gal-(1-&gt;3)-beta-D-Gal-(1-&gt;4)-beta-D-Xyl}-L-seryl-[protein] + UDP-N-acetyl-alpha-D-glucosamine = 3-O-{alpha-D-GlcNAc-[(1-&gt;4)-beta-D-GlcA-(1-&gt;4)-alpha-D-GlcNAc](n)-(1-&gt;4)-beta-D-GlcA-(1-&gt;3)-beta-D-Gal-(1-&gt;3)-beta-D-Gal-(1-&gt;4)-beta-D-Xyl}-L-seryl-[protein] + UDP + H(+). It functions in the pathway protein modification; protein glycosylation. In terms of biological role, glycosyltransferase forming with EXT1 the heterodimeric heparan sulfate polymerase which catalyzes the elongation of the heparan sulfate glycan backbone. Glycan backbone extension consists in the alternating transfer of (1-&gt;4)-beta-D-GlcA and (1-&gt;4)-alpha-D-GlcNAc residues from their respective UDP-sugar donors. Both EXT1 and EXT2 are required for the full activity of the polymerase since EXT1 bears the N-acetylglucosaminyl-proteoglycan 4-beta-glucuronosyltransferase activity within the complex while EXT2 carries the glucuronosyl-N-acetylglucosaminyl-proteoglycan 4-alpha-N-acetylglucosaminyltransferase activity. Heparan sulfate proteoglycans are ubiquitous components of the extracellular matrix and play an important role in tissue homeostasis and signaling. The protein is Exostosin-2 of Homo sapiens (Human).